The primary structure comprises 595 residues: Sialic acid-binding Ig-like lectin 12 (595 aa).

The first 18 residues, 1–18, serve as a signal peptide directing secretion; sequence MLLLLLLLPPLLCGRVGA. Ig-like V-type domains lie at 19–142 and 143–269; these read KEQK…VNVT and ASQD…VHVT. Residues 19–481 are Extracellular-facing; sequence KEQKDYLLTM…RPISGVTLGA (463 aa). A disulfide bridge links Cys44 with Cys104. Residues Asn140, Asn179, Asn230, and Asn290 are each glycosylated (N-linked (GlcNAc...) asparagine). 3 disulfides stabilise this stretch: Cys166/Cys299, Cys171/Cys231, and Cys293/Cys342. Positions 275-358 constitute an Ig-like C2-type 1 domain; that stretch reads PTFSIPGTLE…AGVTMTRAVR (84 aa). N-linked (GlcNAc...) asparagine glycosylation is found at Asn360, Asn367, and Asn385. Residues 365-462 form the Ig-like C2-type 2 domain; sequence PQNLTMTVFQ…GSQHISLSLS (98 aa). Cys401 and Cys446 form a disulfide bridge. A helical membrane pass occupies residues 482 to 502; the sequence is FGGAGATALVFLYFCIIFVVV. Over 503-595 the chain is Cytoplasmic; that stretch reads RSCRKKSARP…YEYSEINIPK (93 aa). The interval 512–560 is disordered; that stretch reads PAVGVGDTGMEDANAVRGSASQGPLIESPADDSPPHHAPPALATPSPEE. Positions 563 to 568 match the ITIM motif motif; that stretch reads IQYASL. 2 positions are modified to phosphotyrosine: Tyr565 and Tyr588. The SLAM-like motif signature appears at 586 to 591; the sequence is YEYSEI.

It belongs to the immunoglobulin superfamily. SIGLEC (sialic acid binding Ig-like lectin) family. In terms of tissue distribution, isoform Short is highly expressed in spleen, small intestine and adrenal gland; it is lower expressed in thyroid, placenta, brain, stomach, bone marrow, spinal cord and breast. Isoform Long is highly expressed in spleen, small intestine and bone marrow; it is lower expressed in thyroid, placenta, thymus, trachea, stomach, lung, adrenal gland, fetal brain and testis.

It localises to the membrane. In terms of biological role, putative adhesion molecule that mediates sialic-acid dependent binding to cells. The sialic acid recognition site may be masked by cis interactions with sialic acids on the same cell surface. In Homo sapiens (Human), this protein is Sialic acid-binding Ig-like lectin 12 (SIGLEC12).